Reading from the N-terminus, the 327-residue chain is 2-keto-3-deoxygluconate permease (327 aa).

10 helical membrane-spanning segments follow: residues Ile-10–Pro-30, Gly-42–Ile-62, Lys-73–Ser-93, Ile-95–Val-115, Ala-139–Gly-159, Ile-163–Ala-183, Val-199–Ile-219, Leu-224–Ala-244, Thr-254–Ala-274, and Ser-289–Trp-309.

Belongs to the KdgT transporter family.

It is found in the cell inner membrane. It catalyses the reaction 2-dehydro-3-deoxy-D-gluconate(in) + H(+)(in) = 2-dehydro-3-deoxy-D-gluconate(out) + H(+)(out). In terms of biological role, catalyzes the proton-dependent uptake of 2-keto-3-deoxygluconate (KDG) into the cell. This chain is 2-keto-3-deoxygluconate permease, found in Escherichia coli O127:H6 (strain E2348/69 / EPEC).